The primary structure comprises 176 residues: Large ribosomal subunit protein uL6 (176 aa).

This sequence belongs to the universal ribosomal protein uL6 family. As to quaternary structure, part of the 50S ribosomal subunit.

Functionally, this protein binds to the 23S rRNA, and is important in its secondary structure. It is located near the subunit interface in the base of the L7/L12 stalk, and near the tRNA binding site of the peptidyltransferase center. The sequence is that of Large ribosomal subunit protein uL6 from Lactobacillus helveticus (strain DPC 4571).